The chain runs to 385 residues: NADH-ubiquinone oxidoreductase chain 2 (385 aa).

A run of 10 helical transmembrane segments spans residues 12-32 (PVLVLMVALGSILLVSASNWL), 34-50 (VYLAIELPTLSLFILVA), 66-86 (FVLGALASGLFLFGCALLCGL), 112-132 (VITPIGSLLITGALLFKLSAA), 161-181 (VFSILVSIGPVANVLLIATIF), 200-220 (LAYSGIAHMGFVLWGIEIGTF), 227-247 (LIYMILYVIMSVCAFAMVLAL), 268-288 (AITLALTFLSIAGVPPLIGFF), 291-311 (WWILLSGITYQYYLVSILAVI), and 354-374 (LLIGASFYLMGFMIISPNLLL).

Belongs to the complex I subunit 2 family.

Its subcellular location is the mitochondrion inner membrane. It catalyses the reaction a ubiquinone + NADH + 5 H(+)(in) = a ubiquinol + NAD(+) + 4 H(+)(out). Its function is as follows. Core subunit of the mitochondrial membrane respiratory chain NADH dehydrogenase (Complex I) that is believed to belong to the minimal assembly required for catalysis. Complex I functions in the transfer of electrons from NADH to the respiratory chain. The immediate electron acceptor for the enzyme is believed to be ubiquinone. In Metridium senile (Brown sea anemone), this protein is NADH-ubiquinone oxidoreductase chain 2 (ND2).